A 206-amino-acid polypeptide reads, in one-letter code: Small ribosomal subunit protein eS8 (206 aa).

Residues 1 to 37 (MGISRDSRHKRSATGAKRAQFRKKRKFELGRQPANTK) form a disordered region.

Belongs to the eukaryotic ribosomal protein eS8 family. Component of the small ribosomal subunit. Mature ribosomes consist of a small (40S) and a large (60S) subunit. The 40S subunit contains about 32 different proteins and 1 molecule of RNA (18S). The 60S subunit contains 45 different proteins and 3 molecules of RNA (25S, 5.8S and 5S).

The protein localises to the cytoplasm. Component of the ribosome, a large ribonucleoprotein complex responsible for the synthesis of proteins in the cell. The small ribosomal subunit (SSU) binds messenger RNAs (mRNAs) and translates the encoded message by selecting cognate aminoacyl-transfer RNA (tRNA) molecules. The large subunit (LSU) contains the ribosomal catalytic site termed the peptidyl transferase center (PTC), which catalyzes the formation of peptide bonds, thereby polymerizing the amino acids delivered by tRNAs into a polypeptide chain. The nascent polypeptides leave the ribosome through a tunnel in the LSU and interact with protein factors that function in enzymatic processing, targeting, and the membrane insertion of nascent chains at the exit of the ribosomal tunnel. The chain is Small ribosomal subunit protein eS8 (RPS8A) from Candida albicans (strain SC5314 / ATCC MYA-2876) (Yeast).